The chain runs to 207 residues: Ribosomal RNA small subunit methyltransferase G (207 aa).

S-adenosyl-L-methionine contacts are provided by residues Gly76, Gln81, 127–128 (VE), and Arg141.

It belongs to the methyltransferase superfamily. RNA methyltransferase RsmG family.

Its subcellular location is the cytoplasm. It catalyses the reaction guanosine(527) in 16S rRNA + S-adenosyl-L-methionine = N(7)-methylguanosine(527) in 16S rRNA + S-adenosyl-L-homocysteine. Specifically methylates the N7 position of guanine in position 527 of 16S rRNA. The protein is Ribosomal RNA small subunit methyltransferase G of Neisseria meningitidis serogroup C / serotype 2a (strain ATCC 700532 / DSM 15464 / FAM18).